Reading from the N-terminus, the 550-residue chain is Chaperonin GroEL (550 aa).

ATP contacts are provided by residues 30–33 (TLGP), K51, 87–91 (DGTTT), G415, and D496.

It belongs to the chaperonin (HSP60) family. In terms of assembly, forms a cylinder of 14 subunits composed of two heptameric rings stacked back-to-back. Interacts with the co-chaperonin GroES.

It is found in the cytoplasm. The enzyme catalyses ATP + H2O + a folded polypeptide = ADP + phosphate + an unfolded polypeptide.. Its function is as follows. Together with its co-chaperonin GroES, plays an essential role in assisting protein folding. The GroEL-GroES system forms a nano-cage that allows encapsulation of the non-native substrate proteins and provides a physical environment optimized to promote and accelerate protein folding. This chain is Chaperonin GroEL, found in Rickettsia bellii (strain OSU 85-389).